A 976-amino-acid polypeptide reads, in one-letter code: Collagen alpha-1(I) chain (976 aa).

Serine 1 bears the Phosphoserine mark. Residues 1–976 (SAGGISVPGP…PGPPGPPGPP (976 aa)) form a disordered region. A 4-hydroxyproline mark is found at proline 20, proline 23, proline 26, proline 35, proline 38, proline 41, proline 55, proline 70, proline 76, proline 85, and proline 91. Residues 58-72 (NGDDGEAGKPGRPGE) show a composition bias toward basic and acidic residues. Residue lysine 94 is modified to 5-hydroxylysine; alternate. Lysine 94 carries an O-linked (Gal...) hydroxylysine; alternate glycan. At serine 100 the chain carries Phosphoserine. Composition is skewed to low complexity over residues 108-118 (DAGPAGPKGAP) and 132-150 (PGAS…TGAA). A 4-hydroxyproline mark is found at proline 118, proline 132, proline 153, proline 162, proline 165, proline 192, proline 195, proline 207, proline 213, proline 222, proline 228, proline 231, and proline 246. Pro residues predominate over residues 152–164 (PPGPTGPAGPPGF). A compositionally biased stretch (low complexity) spans 198–237 (AGAAGPAGNPGADGQPGAKGANGAPGIAGAPGFPGARGPS). Lysine 249 is modified (5-hydroxylysine). A 4-hydroxyproline mark is found at proline 255, proline 258, proline 266, proline 275, proline 290, proline 296, proline 304, and proline 310. Positions 294–308 (GLPGPGERGGPGSRG) are enriched in gly residues. At lysine 319 the chain carries 5-hydroxylysine. 4-hydroxyproline occurs at positions 328, 337, 343, 349, 358, 361, 370, 379, 385, 397, 406, 415, 418, 436, 453, 459, 465, 471, 477, 483, 495, 504, 517, 523, and 532. Over residues 352–378 (KGLTGSPGSPGPDGKTGPPGPAGQDGR) the composition is skewed to low complexity. Residues 387 to 406 (ARGQAGVMGFPGPKGAAGEP) show a composition bias toward low complexity. Over residues 465 to 474 (PGEAGKPGEQ) the composition is skewed to low complexity. Lysine 544 bears the 5-hydroxylysine mark. Residues proline 550, proline 565, and proline 571 each carry the 4-hydroxyproline modification. A compositionally biased stretch (low complexity) spans 577–591 (SGPSGPAGPTGARGA). Residue serine 580 is modified to Phosphoserine. 4-hydroxyproline occurs at positions 592, 598, 601, 610, 616, 634, 643, and 652. Low complexity predominate over residues 604-631 (AGFAGPPGADGQPGAKGEPGDAGAKGDA). 5-hydroxylysine is present on lysine 655. A compositionally biased stretch (low complexity) spans 660 to 676 (SAGPPGATGFPGAAGRV). Proline 664 and proline 670 each carry 4-hydroxyproline. Proline 678 carries the 3-hydroxyproline modification. 15 positions are modified to 4-hydroxyproline: proline 679, proline 688, proline 691, proline 718, proline 726, proline 735, proline 753, proline 762, proline 765, proline 771, proline 786, proline 792, proline 798, proline 806, and proline 812. The segment covering 723 to 735 (KGSPGADGPAGAP) has biased composition (low complexity). Pro residues predominate over residues 785-795 (PPGPMGPPGLA). Lysine 821 is modified (5-hydroxylysine). Positions 829-844 (PGPPGAPGAPGAPGPV) are enriched in pro residues. 3 positions are modified to 4-hydroxyproline: proline 832, proline 835, and proline 838. Residues 864 to 878 (AGPAGARGPAGPQGP) show a composition bias toward low complexity. The segment covering 879-893 (RGDKGETGEQGDRGI) has biased composition (basic and acidic residues). A 5-hydroxylysine modification is found at lysine 882. At lysine 894 the chain carries 5-hydroxylysine; alternate. Lysine 894 carries O-linked (Gal...) hydroxylysine; alternate glycosylation. A 4-hydroxyproline mark is found at proline 907, proline 910, proline 928, and proline 943. The segment covering 910-943 (PGEQGPSGASGPAGPRGPPGSAGSPGKDGLNGLP) has biased composition (low complexity). 3-hydroxyproline is present on proline 948. At proline 949 the chain carries 4-hydroxyproline. Over residues 961 to 976 (VGPPGPPGPPGPPGPP) the composition is skewed to pro residues. The residue at position 963 (proline 963) is a 3-hydroxyproline. At proline 964 the chain carries 4-hydroxyproline. The residue at position 966 (proline 966) is a 3-hydroxyproline. A 4-hydroxyproline modification is found at proline 967. A 3-hydroxyproline modification is found at proline 969. 4-hydroxyproline occurs at positions 970, 973, and 976.

Belongs to the fibrillar collagen family. In terms of assembly, trimers of one alpha 2(I) and two alpha 1(I) chains. Contains mostly 4-hydroxyproline. Proline residues at the third position of the tripeptide repeating unit (G-X-Y) are hydroxylated in some or all of the chains. Post-translationally, contains 3-hydroxyproline at a few sites. This modification occurs on the first proline residue in the sequence motif Gly-Pro-Hyp, where Hyp is 4-hydroxyproline. In terms of processing, lysine residues at the third position of the tripeptide repeating unit (G-X-Y) are 5-hydroxylated in some or all of the chains. O-glycosylated on hydroxylated lysine residues. The O-linked glycan consists of a Glc-Gal disaccharide. Expressed in bones.

It localises to the secreted. Its subcellular location is the extracellular space. The protein resides in the extracellular matrix. In terms of biological role, type I collagen is a member of group I collagen (fibrillar forming collagen). The chain is Collagen alpha-1(I) chain from Acratocnus ye (Hispaniolan ground sloth).